Here is a 704-residue protein sequence, read N- to C-terminus: Polyribonucleotide nucleotidyltransferase (704 aa).

Asp486 and Asp492 together coordinate Mg(2+). The 60-residue stretch at 553–612 folds into the KH domain; that stretch reads PKIVIVKINPDKIRDVIGPGGKQINKIIEETGVKIDTEQDGTIYISSANEEMNARAKQII. The 69-residue stretch at 622–690 folds into the S1 motif domain; it reads GEYYLSTVKR…KQGRVNLSRK (69 aa).

It belongs to the polyribonucleotide nucleotidyltransferase family. The cofactor is Mg(2+).

It localises to the cytoplasm. It carries out the reaction RNA(n+1) + phosphate = RNA(n) + a ribonucleoside 5'-diphosphate. Involved in mRNA degradation. Catalyzes the phosphorolysis of single-stranded polyribonucleotides processively in the 3'- to 5'-direction. The protein is Polyribonucleotide nucleotidyltransferase of Lysinibacillus sphaericus (strain C3-41).